Reading from the N-terminus, the 215-residue chain is Histidine biosynthesis bifunctional protein HisIE (215 aa).

Residues 1 to 114 (MLKKHDLLNL…FISNKYNINF (114 aa)) are phosphoribosyl-AMP cyclohydrolase. Residues 115 to 215 (LFKLEEIIEE…LNTNSEKLLK (101 aa)) are phosphoribosyl-ATP pyrophosphohydrolase.

This sequence in the N-terminal section; belongs to the PRA-CH family. It in the C-terminal section; belongs to the PRA-PH family.

Its subcellular location is the cytoplasm. It catalyses the reaction 1-(5-phospho-beta-D-ribosyl)-ATP + H2O = 1-(5-phospho-beta-D-ribosyl)-5'-AMP + diphosphate + H(+). The enzyme catalyses 1-(5-phospho-beta-D-ribosyl)-5'-AMP + H2O = 1-(5-phospho-beta-D-ribosyl)-5-[(5-phospho-beta-D-ribosylamino)methylideneamino]imidazole-4-carboxamide. Its pathway is amino-acid biosynthesis; L-histidine biosynthesis; L-histidine from 5-phospho-alpha-D-ribose 1-diphosphate: step 2/9. It functions in the pathway amino-acid biosynthesis; L-histidine biosynthesis; L-histidine from 5-phospho-alpha-D-ribose 1-diphosphate: step 3/9. The chain is Histidine biosynthesis bifunctional protein HisIE (hisI) from Buchnera aphidicola subsp. Acyrthosiphon pisum (strain APS) (Acyrthosiphon pisum symbiotic bacterium).